Reading from the N-terminus, the 162-residue chain is UPF0102 protein Bpet0439 (162 aa).

Positions 15-52 are disordered; it reads QAQQRQMKRRRAAAHRAARGPAPARAPRASPTQRTGTA. Over residues 20–32 the composition is skewed to basic residues; sequence QMKRRRAAAHRAA. The span at 33–48 shows a compositional bias: low complexity; it reads RGPAPARAPRASPTQR.

It belongs to the UPF0102 family.

This Bordetella petrii (strain ATCC BAA-461 / DSM 12804 / CCUG 43448) protein is UPF0102 protein Bpet0439.